Reading from the N-terminus, the 161-residue chain is 2-C-methyl-D-erythritol 2,4-cyclodiphosphate synthase (161 aa).

A divalent metal cation is bound by residues Asp11 and His13. 4-CDP-2-C-methyl-D-erythritol 2-phosphate is bound by residues 11-13 (DIH) and 37-38 (HS). His45 contributes to the a divalent metal cation binding site. 4-CDP-2-C-methyl-D-erythritol 2-phosphate is bound by residues 59–61 (DIG) and 135–138 (TTNE).

Belongs to the IspF family. Homotrimer. A divalent metal cation serves as cofactor.

It catalyses the reaction 4-CDP-2-C-methyl-D-erythritol 2-phosphate = 2-C-methyl-D-erythritol 2,4-cyclic diphosphate + CMP. Its pathway is isoprenoid biosynthesis; isopentenyl diphosphate biosynthesis via DXP pathway; isopentenyl diphosphate from 1-deoxy-D-xylulose 5-phosphate: step 4/6. Its function is as follows. Involved in the biosynthesis of isopentenyl diphosphate (IPP) and dimethylallyl diphosphate (DMAPP), two major building blocks of isoprenoid compounds. Catalyzes the conversion of 4-diphosphocytidyl-2-C-methyl-D-erythritol 2-phosphate (CDP-ME2P) to 2-C-methyl-D-erythritol 2,4-cyclodiphosphate (ME-CPP) with a corresponding release of cytidine 5-monophosphate (CMP). The chain is 2-C-methyl-D-erythritol 2,4-cyclodiphosphate synthase from Acaryochloris marina (strain MBIC 11017).